We begin with the raw amino-acid sequence, 345 residues long: Isocitrate lyase (345 aa).

Residue 58 to 60 (SGY) coordinates substrate. Residue D98 participates in Mg(2+) binding. Residue C135 is the Proton acceptor of the active site. Substrate is bound by residues 136–137 (GH), R170, 230–234 (NYSSS), and T260. The segment at 318-345 (DPEARRRIEESEGFSEEQADPITSNDDD) is disordered. The span at 328-345 (SEGFSEEQADPITSNDDD) shows a compositional bias: acidic residues.

As to quaternary structure, homotetramer or homotrimer. Mg(2+) serves as cofactor.

The catalysed reaction is D-threo-isocitrate = glyoxylate + succinate. It participates in carbohydrate metabolism; glyoxylate cycle; (S)-malate from isocitrate: step 1/2. Its function is as follows. Involved in the metabolic adaptation in response to environmental changes. Catalyzes the reversible formation of succinate and glyoxylate from isocitrate, a key step of the glyoxylate cycle, which operates as an anaplerotic route for replenishing the tricarboxylic acid cycle during growth on fatty acid substrates. This chain is Isocitrate lyase (aceA), found in Haloferax volcanii (strain ATCC 29605 / DSM 3757 / JCM 8879 / NBRC 14742 / NCIMB 2012 / VKM B-1768 / DS2) (Halobacterium volcanii).